Here is a 490-residue protein sequence, read N- to C-terminus: Transcriptional regulator FleQ (490 aa).

Leucine 142 is a binding site for 3',3'-c-di-GMP. ADP contacts are provided by residues valine 147 and 177–182 (GTGKEV). Residues 186–189 (NLHY) and 330–341 (ELISRMEHEKRG) contribute to the 3',3'-c-di-GMP site. The ADP site is built by arginine 334 and arginine 363.

Forms homodimers. Forms homohexamers that inhibit transcription initiation. Interacts with FleN; this complex is formed in the presence as well as in the absence of c-di-GMP or ATP.

With respect to regulation, C-di-GMP interaction leads to active site obstruction, hexameric ring destabilization thus relieving DNA bending and activating gene transcription. In terms of biological role, AAA+ ATPase enhancer-binding protein that acts as a transcription regulator and plays a role in the modulation of mucin adhesion and flagellar gene expression. In addition to flagella genes, also regulates expression of biofilm-related genes. Functions as a transcriptional repressor in the absence of c-di-GMP and as an activator when c-di-GMP is present. This is Transcriptional regulator FleQ from Pseudomonas aeruginosa (strain ATCC 15692 / DSM 22644 / CIP 104116 / JCM 14847 / LMG 12228 / 1C / PRS 101 / PAO1).